The primary structure comprises 272 residues: Insulin-like growth factor-binding protein 5 (272 aa).

Positions 1–20 are cleaved as a signal peptide; it reads MVLLTAVLLLLAAYAGPAQS. Residues 23–103 enclose the IGFBP N-terminal domain; sequence SFVHCEPCDE…LHGRGVCLNE (81 aa). Disulfide bonds link Cys27–Cys53, Cys30–Cys55, Cys38–Cys56, Cys45–Cys59, Cys67–Cys80, and Cys74–Cys100. Over residues 111-122 the composition is skewed to basic and acidic residues; sequence KIERDSREHEEP. A disordered region spans residues 111-130; the sequence is KIERDSREHEEPTTSEMAEE. Ser116 is modified (phosphoserine; by FAM20C). A glycan (O-linked (HexNAc...) threonine) is linked at Thr172. Positions 189 to 263 constitute a Thyroglobulin type-1 domain; that stretch reads QGPCRRHMEA…MEYVDGDFQC (75 aa). 3 cysteine pairs are disulfide-bonded: Cys192/Cys219, Cys230/Cys241, and Cys243/Cys263.

As to quaternary structure, interacts with IGF1; this interaction enhances the growth stimulatory effects of IGF1 on fibroblasts. Interacts with CAV1; this interaction allows trafficking of IGFBP5 from the plasma membrane to the nucleus. Interacts with NCL; this interaction is necessary for IGFBP5 localization to the nucleus. In terms of processing, cleaved by C1S in extracellular space. As to expression, osteosarcoma, and at lower levels in liver, kidney and brain.

The protein localises to the secreted. The protein resides in the cytoplasm. It is found in the nucleus. Its function is as follows. Multifunctional protein that plays a critical role in regulating the availability of IGFs to their receptors and thereby regulates IGF-mediated cellular processes including proliferation, differentiation, and apoptosis in a cell-type specific manner. Increases the cell proliferation of osteoblasts, intestinal smooth muscle cells and neuroblastoma cells. Enhances adhesion and survival of epithelial cells but decreases adhesion of mesenchymal cells. Once secreted, acts as a major mediator of mTORC1-dependent feedback inhibition of IGF1 signaling. Also plays a role in the induction of extracellular matrix (ECM) production and deposition independently of its nuclear translocation and binding to IGFs. Acts itself as a growth factor that can act independently of IGFs to regulate bone formation. Acts as a ligand for the ROR1 receptor which triggers formation of ROR1/HER2 heterodimer to enhance CREB oncogenic signaling. This chain is Insulin-like growth factor-binding protein 5 (IGFBP5), found in Homo sapiens (Human).